The following is a 559-amino-acid chain: Potassium-transporting ATPase potassium-binding subunit (559 aa).

The next 13 membrane-spanning stretches (helical) occupy residues 5-25 (GFLL…PLGS), 27-47 (LARL…RILW), 63-83 (LLAL…LLFW), 132-152 (GLTV…FALI), 170-190 (LVRI…LFFI), 253-273 (LAQM…FGEA), 283-303 (LLWA…WAEV), 327-347 (FGVL…CGAV), 356-376 (ALGG…FGGV), 379-399 (GLYG…LMIG), 416-436 (MTAL…ALAM), 484-504 (LLAF…MAIA), and 524-544 (GALF…LTFI).

It belongs to the KdpA family. As to quaternary structure, the system is composed of three essential subunits: KdpA, KdpB and KdpC.

Its subcellular location is the cell inner membrane. Functionally, part of the high-affinity ATP-driven potassium transport (or Kdp) system, which catalyzes the hydrolysis of ATP coupled with the electrogenic transport of potassium into the cytoplasm. This subunit binds the periplasmic potassium ions and delivers the ions to the membrane domain of KdpB through an intramembrane tunnel. The sequence is that of Potassium-transporting ATPase potassium-binding subunit from Salmonella choleraesuis (strain SC-B67).